Reading from the N-terminus, the 157-residue chain is TGEKPFTCTECGKNFSFTTSFIRHMRIHTGEKPYSCADCGKHFSEKMYLQFHQKNPSECEEYVTLKATLQSHQSVEKPFTCTECGKCFSLSSYLHRHQRLHTGDRPFSCAECGKAFSGKAQLQDHQNTHTGEKPFTCTECGKCFTRKGSLQMHQKIH.

5 consecutive C2H2-type zinc fingers follow at residues 6 to 28, 34 to 56, 79 to 101, 107 to 129, and 135 to 157; these read FTCT…MRIH, YSCA…QKNP, FTCT…QRLH, FSCA…QNTH, and FTCT…QKIH.

The protein belongs to the krueppel C2H2-type zinc-finger protein family.

Its subcellular location is the nucleus. Its function is as follows. May be involved in transcriptional regulation. The polypeptide is Oocyte zinc finger protein XlCOF2 (Xenopus laevis (African clawed frog)).